The chain runs to 450 residues: UDP-N-acetylmuramoylalanine--D-glutamate ligase (450 aa).

119–125 (GSNGKTT) lines the ATP pocket.

This sequence belongs to the MurCDEF family.

Its subcellular location is the cytoplasm. The enzyme catalyses UDP-N-acetyl-alpha-D-muramoyl-L-alanine + D-glutamate + ATP = UDP-N-acetyl-alpha-D-muramoyl-L-alanyl-D-glutamate + ADP + phosphate + H(+). The protein operates within cell wall biogenesis; peptidoglycan biosynthesis. Its function is as follows. Cell wall formation. Catalyzes the addition of glutamate to the nucleotide precursor UDP-N-acetylmuramoyl-L-alanine (UMA). The polypeptide is UDP-N-acetylmuramoylalanine--D-glutamate ligase (Streptococcus gordonii (strain Challis / ATCC 35105 / BCRC 15272 / CH1 / DL1 / V288)).